The chain runs to 94 residues: Small ribosomal subunit protein bS18 (94 aa).

This sequence belongs to the bacterial ribosomal protein bS18 family. Part of the 30S ribosomal subunit. Forms a tight heterodimer with protein bS6.

In terms of biological role, binds as a heterodimer with protein bS6 to the central domain of the 16S rRNA, where it helps stabilize the platform of the 30S subunit. This Polaromonas sp. (strain JS666 / ATCC BAA-500) protein is Small ribosomal subunit protein bS18.